The primary structure comprises 322 residues: Transmembrane protein 171 (322 aa).

A run of 4 helical transmembrane segments spans residues 22–42, 57–77, 112–132, and 159–179; these read IFFL…LSIF, IVLK…VILA, LIFG…GIWV, and FLSL…FFVV. Residues 223–322 are disordered; sequence PPPYFPESSA…LGAPSDASPP (100 aa). Over residues 228-241 the composition is skewed to low complexity; it reads PESSAAAPSPGANS. Polar residues-rich tracts occupy residues 242–267 and 279–289; these read LHQI…NQGA and ISGQGSSSERS.

The protein localises to the membrane. The sequence is that of Transmembrane protein 171 (Tmem171) from Mus musculus (Mouse).